We begin with the raw amino-acid sequence, 616 residues long: MAPRFSWSFATSWHALAILALWPVSTLAGDKSAADYYVRELPGLPKDSPPIKMHAGHIEVTPETNGNLFFWHFQNNHIANRQRTVVWLNGGPGCSSEDGALMEVGPYRVTKDNALTLNNGTWNEFANLLFVDNPVGTGFSYVDTNSYIHGLNAMATQFITFLEKFFALFPEYESDDLYFAGESYAGQHIPYIAKAILDRNKLKSRAETWKLSGLLIGNGWISPQDQSSAYLKFSLEKGLIEKGSDNAQQLQHMQRICDKEMSINPGHVDYPECESILNKILELTREGSGDQACINMYDVRLRDSAPSCGMNWPPDLKYVGPYLRQPQVISALNLDKQRNTGWQECNSMVNANFRNQNATASISLLPDILKEVPILLFSGAEDLICNHVGTEELISNLAWNEGKGFEVTPGNWAPRRQWTFEGEVAGFWQEARNLTYVLFHNASHMVPFDYPRRSRDMLDRFMKVDISSIGGQPSDSRIDGEKGPDTSVGGAKNNTQQHEEETKQKLNEAKWHAYQRSGEVVLVIVIIAASVWGYFVWRQRRKGAAYSALQNDEAAGQSRTGLAAFHDRQSDRDLEAAAFDETTVDNIPLQESIGRGESKYSIGDDSDEEEEGTTKT.

The first 28 residues, 1–28 (MAPRFSWSFATSWHALAILALWPVSTLA), serve as a signal peptide directing secretion. The Lumenal segment spans residues 29-516 (GDKSAADYYV…NEAKWHAYQR (488 aa)). Asparagine 119 carries N-linked (GlcNAc...) asparagine glycosylation. The active site involves serine 183. N-linked (GlcNAc...) asparagine glycosylation occurs at asparagine 357. Aspartate 382 is an active-site residue. Asparagine 433 and asparagine 441 each carry an N-linked (GlcNAc...) asparagine glycan. Histidine 444 is a catalytic residue. A disordered region spans residues 468–504 (SIGGQPSDSRIDGEKGPDTSVGGAKNNTQQHEEETKQ). The N-linked (GlcNAc...) asparagine glycan is linked to asparagine 493. A helical transmembrane segment spans residues 517–537 (SGEVVLVIVIIAASVWGYFVW). Residues 538–616 (RQRRKGAAYS…DEEEEGTTKT (79 aa)) lie on the Cytoplasmic side of the membrane. A disordered region spans residues 577–616 (AAFDETTVDNIPLQESIGRGESKYSIGDDSDEEEEGTTKT). Residues 604–616 (DDSDEEEEGTTKT) are compositionally biased toward acidic residues.

The protein belongs to the peptidase S10 family.

The protein resides in the golgi apparatus. It is found in the trans-Golgi network membrane. The enzyme catalyses Preferential release of a C-terminal arginine or lysine residue.. Functionally, protease with a carboxypeptidase B-like function involved in the C-terminal processing of the lysine and arginine residues from protein precursors. Promotes cell fusion and is involved in the programmed cell death. The polypeptide is Pheromone-processing carboxypeptidase KEX1 (KEX1) (Metarhizium acridum (strain CQMa 102)).